A 307-amino-acid chain; its full sequence is uncharacterized protein (307 aa).

It to B.burgdorferi BB0340.

This is an uncharacterized protein from Treponema pallidum (strain Nichols).